The chain runs to 846 residues: Integrin beta-PS (846 aa).

The signal sequence occupies residues 1-28 (MILERNRRCQLALLMIAILAAIAGQTDA). Residues 29 to 777 (QKAAKLTAVS…NKECPAKVFM (749 aa)) lie on the Extracellular side of the membrane. A disulfide bond links Cys-46 and Cys-55. The N-linked (GlcNAc...) asparagine glycan is linked to Asn-72. A VWFA domain is found at 186 to 419 (DLYYLMDLSK…ELVKEEYRKI (234 aa)). Residues Cys-249 and Cys-252 are joined by a disulfide bond. N-linked (GlcNAc...) asparagine glycosylation is found at Asn-266 and Asn-277. A disulfide bridge connects residues Cys-300 and Cys-341. N-linked (GlcNAc...) asparagine glycans are attached at residues Asn-403 and Asn-428. Disulfide bonds link Cys-441–Cys-453, Cys-473–Cys-741, Cys-507–Cys-530, Cys-522–Cys-533, Cys-535–Cys-544, Cys-546–Cys-579, Cys-561–Cys-577, Cys-571–Cys-582, Cys-584–Cys-599, Cys-601–Cys-624, Cys-606–Cys-622, Cys-614–Cys-627, Cys-629–Cys-638, Cys-640–Cys-664, Cys-647–Cys-662, Cys-656–Cys-667, Cys-669–Cys-682, Cys-685–Cys-688, Cys-692–Cys-701, Cys-698–Cys-771, and Cys-719–Cys-749. I-EGF domains are found at residues 507–545 (CENP…NKCE), 546–600 (CSAT…KHCE), 601–639 (CDNF…SNCG), and 640–683 (CQES…RHCE). Asn-557 is a glycosylation site (N-linked (GlcNAc...) asparagine). N-linked (GlcNAc...) asparagine glycosylation occurs at Asn-603. Asn-644 is a glycosylation site (N-linked (GlcNAc...) asparagine). Asn-718 carries N-linked (GlcNAc...) asparagine glycosylation. Residues 778-798 (LGIVMGVIAAIVLVGLAILLL) form a helical membrane-spanning segment. Topologically, residues 799-846 (WKLLTTIHDRREFARFEKERMNAKWDTGENPIYKQATSTFKNPMYAGK) are cytoplasmic. A phosphotyrosine mark is found at Tyr-831 and Tyr-843.

This sequence belongs to the integrin beta chain family. Heterodimer of an alpha and a beta subunit. Beta-PS associates with either alpha-PS1, alpha-PS2, alpha-PS3, alpha-PS4 or alpha-PS5. In ovaries, strongly expressed in follicle cells. In oocytes, expressed in the forming dorsal appendages (at protein level). Expressed in the embryonic dorsal cuticle, the larval eye and the wing imaginal disk. In testes, detected at the interface between somatic hub cells and cyst stem cells.

The protein resides in the cell membrane. It localises to the apical cell membrane. It is found in the lateral cell membrane. Its subcellular location is the basal cell membrane. Functionally, integrin alpha-PS1/beta-PS is a receptor for laminin. Integrin alpha-PS2/beta-PS is a receptor for Tig, wb and Ten-m. Contributes to endodermal integrity and adhesion between the midgut epithelium and the surrounding visceral muscle. Essential for migration of the primordial midgut cells and for maintaining, but not establishing, cell polarity in the midgut epithelium. The two beta subunits mediate midgut migration by distinct mechanisms: beta-PS requires rhea/talin and Itgbn does not. Required for rhea/talin correct cellular localization in the midgut. Required for many embryonic (dorsal closure and somatic muscle attachments) and postembryonic developmental processes (attachment between cell layers of imaginal disks, organization of ommatidial arrays and flight muscle development). Involved in the function and/or development of the olfactory system. In the testes, essential for shv-dependent maintenance of somatic hub cells and their localization to the apical tip. Plays a role in timely border cell migration during oogenesis. The protein is Integrin beta-PS (mys) of Drosophila melanogaster (Fruit fly).